The primary structure comprises 307 residues: Glutathione synthetase (307 aa).

Residues 120-304 (KLGALRFSRW…LADQTIERLR (185 aa)) enclose the ATP-grasp domain. An ATP-binding site is contributed by 146-202 (AREQGDVVLKPLGGRAGLGVIRVQAEAPGLKALLELVTEQERLPVMAQRFLPDVTEG). Mg(2+)-binding residues include E275 and N277.

Belongs to the prokaryotic GSH synthase family. It depends on Mg(2+) as a cofactor. Requires Mn(2+) as cofactor.

The enzyme catalyses gamma-L-glutamyl-L-cysteine + glycine + ATP = glutathione + ADP + phosphate + H(+). It functions in the pathway sulfur metabolism; glutathione biosynthesis; glutathione from L-cysteine and L-glutamate: step 2/2. In Parasynechococcus marenigrum (strain WH8102), this protein is Glutathione synthetase.